A 534-amino-acid chain; its full sequence is CTP synthase (534 aa).

An amidoligase domain region spans residues 1–266; the sequence is MKQKFIFVTG…DELIVARLGL (266 aa). Serine 14 contacts CTP. Serine 14 contributes to the UTP binding site. ATP is bound by residues 15–20 and aspartate 72; that span reads SIGKGL. The Mg(2+) site is built by aspartate 72 and glutamate 140. CTP is bound by residues 147-149, 187-192, and lysine 223; these read DIE and KSKPTQ. UTP contacts are provided by residues 187–192 and lysine 223; that span reads KSKPTQ. Residues 291–534 form the Glutamine amidotransferase type-1 domain; it reads KIGVVGKYVD…HFVKASLKKK (244 aa). Glycine 353 contacts L-glutamine. The active-site Nucleophile; for glutamine hydrolysis is cysteine 380. Residues 381–384, glutamate 404, and arginine 464 contribute to the L-glutamine site; that span reads FGMQ. Active-site residues include histidine 509 and glutamate 511.

It belongs to the CTP synthase family. Homotetramer.

The catalysed reaction is UTP + L-glutamine + ATP + H2O = CTP + L-glutamate + ADP + phosphate + 2 H(+). The enzyme catalyses L-glutamine + H2O = L-glutamate + NH4(+). It catalyses the reaction UTP + NH4(+) + ATP = CTP + ADP + phosphate + 2 H(+). It participates in pyrimidine metabolism; CTP biosynthesis via de novo pathway; CTP from UDP: step 2/2. With respect to regulation, allosterically activated by GTP, when glutamine is the substrate; GTP has no effect on the reaction when ammonia is the substrate. The allosteric effector GTP functions by stabilizing the protein conformation that binds the tetrahedral intermediate(s) formed during glutamine hydrolysis. Inhibited by the product CTP, via allosteric rather than competitive inhibition. Functionally, catalyzes the ATP-dependent amination of UTP to CTP with either L-glutamine or ammonia as the source of nitrogen. Regulates intracellular CTP levels through interactions with the four ribonucleotide triphosphates. This chain is CTP synthase, found in Bdellovibrio bacteriovorus (strain ATCC 15356 / DSM 50701 / NCIMB 9529 / HD100).